The chain runs to 529 residues: Tyrosinase (529 aa).

The first 18 residues, 1–18 (MLLAVLYCLLWSFQTSAG), serve as a signal peptide directing secretion. The Lumenal, melanosome segment spans residues 19–476 (HFPRACVSSK…YLEQASRIWS (458 aa)). 3 N-linked (GlcNAc...) asparagine glycosylation sites follow: N86, N111, and N161. The Cu cation site is built by H180, H202, and H211. N-linked (GlcNAc...) asparagine glycosylation occurs at N230. Residues 287–313 (SLCNGTPEGPLQRNPGNHDKSRTPRLP) form a disordered region. A glycan (N-linked (GlcNAc...) asparagine) is linked at N337. Cu cation contacts are provided by H363 and H367. An N-linked (GlcNAc...) asparagine glycan is attached at N371. H390 lines the Cu cation pocket. The helical transmembrane segment at 477 to 497 (WLLGAAMVGAVLTALLAGLVS) threads the bilayer. The Cytoplasmic portion of the chain corresponds to 498–529 (LLCRHKRKQLPEEKQPLLMEKEDYHSLYQSHL).

Belongs to the tyrosinase family. Forms an OPN3-dependent complex with DCT in response to blue light in melanocytes. Cu(2+) is required as a cofactor. Post-translationally, glycosylated.

Its subcellular location is the melanosome membrane. It is found in the melanosome. It catalyses the reaction 2 L-dopa + O2 = 2 L-dopaquinone + 2 H2O. The enzyme catalyses L-tyrosine + O2 = L-dopaquinone + H2O. The catalysed reaction is 2 5,6-dihydroxyindole-2-carboxylate + O2 = 2 indole-5,6-quinone-2-carboxylate + 2 H2O. This is a copper-containing oxidase that functions in the formation of pigments such as melanins and other polyphenolic compounds. Catalyzes the initial and rate limiting step in the cascade of reactions leading to melanin production from tyrosine. In addition to hydroxylating tyrosine to DOPA (3,4-dihydroxyphenylalanine), also catalyzes the oxidation of DOPA to DOPA-quinone, and possibly the oxidation of DHI (5,6-dihydroxyindole) to indole-5,6 quinone. This chain is Tyrosinase (TYR), found in Gorilla gorilla gorilla (Western lowland gorilla).